The sequence spans 366 residues: HTH-type transcriptional regulator MSMEG_6044/MSMEI_5883 (366 aa).

The region spanning 11-66 (ATLASLAAELKVSRTTISNAYNRPDQLSADLRERIFDAAKRLGYPGPDPVARSLRT) is the HTH lacI-type domain. A DNA-binding region (H-T-H motif) is located at residues 13 to 32 (LASLAAELKVSRTTISNAYN).

Transcriptional regulator that negatively regulates transcription of the mce4 operon, which is involved in cholesterol transport and utilization. Acts by binding to the promoter region of the mce4 operon. This chain is HTH-type transcriptional regulator MSMEG_6044/MSMEI_5883, found in Mycolicibacterium smegmatis (strain ATCC 700084 / mc(2)155) (Mycobacterium smegmatis).